Reading from the N-terminus, the 336-residue chain is DNA-directed RNA polymerase subunit alpha (336 aa).

The segment at 1 to 238 (MNDLDLNLVP…NLFLPFLQAE (238 aa)) is alpha N-terminal domain (alpha-NTD). The segment at 267 to 336 (AKKVTFQHIF…LQKRFGMRLQ (70 aa)) is alpha C-terminal domain (alpha-CTD).

The protein belongs to the RNA polymerase alpha chain family. In terms of assembly, in plastids the minimal PEP RNA polymerase catalytic core is composed of four subunits: alpha, beta, beta', and beta''. When a (nuclear-encoded) sigma factor is associated with the core the holoenzyme is formed, which can initiate transcription.

The protein localises to the plastid. It localises to the chloroplast. The enzyme catalyses RNA(n) + a ribonucleoside 5'-triphosphate = RNA(n+1) + diphosphate. Functionally, DNA-dependent RNA polymerase catalyzes the transcription of DNA into RNA using the four ribonucleoside triphosphates as substrates. The protein is DNA-directed RNA polymerase subunit alpha of Huperzia lucidula (Shining clubmoss).